The primary structure comprises 319 residues: ATP-dependent 6-phosphofructokinase (319 aa).

Glycine 11 lines the ATP pocket. 21–25 (RAVVR) is a binding site for ADP. ATP contacts are provided by residues 72–73 (RC) and 102–105 (GDGS). Aspartate 103 is a Mg(2+) binding site. Residue 125–127 (TID) coordinates substrate. Aspartate 127 (proton acceptor) is an active-site residue. Arginine 154 serves as a coordination point for ADP. Substrate is bound by residues arginine 162 and 169 to 171 (MGR). Residues 185–187 (GAE), arginine 211, and 213–215 (KKH) contribute to the ADP site. Residues glutamate 222, arginine 243, and 249 to 252 (HVQR) each bind substrate.

The protein belongs to the phosphofructokinase type A (PFKA) family. ATP-dependent PFK group I subfamily. Prokaryotic clade 'B1' sub-subfamily. In terms of assembly, homotetramer. It depends on Mg(2+) as a cofactor.

The protein localises to the cytoplasm. The enzyme catalyses beta-D-fructose 6-phosphate + ATP = beta-D-fructose 1,6-bisphosphate + ADP + H(+). The protein operates within carbohydrate degradation; glycolysis; D-glyceraldehyde 3-phosphate and glycerone phosphate from D-glucose: step 3/4. Its activity is regulated as follows. Allosterically activated by ADP and other diphosphonucleosides, and allosterically inhibited by phosphoenolpyruvate. Its function is as follows. Catalyzes the phosphorylation of D-fructose 6-phosphate to fructose 1,6-bisphosphate by ATP, the first committing step of glycolysis. This chain is ATP-dependent 6-phosphofructokinase, found in Geobacillus kaustophilus (strain HTA426).